Reading from the N-terminus, the 113-residue chain is Large ribosomal subunit protein uL24 (113 aa).

This sequence belongs to the universal ribosomal protein uL24 family. In terms of assembly, part of the 50S ribosomal subunit.

Functionally, one of two assembly initiator proteins, it binds directly to the 5'-end of the 23S rRNA, where it nucleates assembly of the 50S subunit. In terms of biological role, one of the proteins that surrounds the polypeptide exit tunnel on the outside of the subunit. This chain is Large ribosomal subunit protein uL24 (rplX), found in Fusobacterium nucleatum subsp. nucleatum (strain ATCC 25586 / DSM 15643 / BCRC 10681 / CIP 101130 / JCM 8532 / KCTC 2640 / LMG 13131 / VPI 4355).